The chain runs to 370 residues: MKIKDAKKPSFPWFGMDIGGTLVKLSYFEPIDITAEEEQEEVESLKSIRKYLTSNVAYGSTGIRDVHLELKDLTLFGRRGNLHFIRFPTQDLPTFIQMGRDKNFSTLQTVLCATGGGAYKFEKDFRTIGNLHLHKLDELDCLVKGLLYIDSVSFNGQAECYYFANASEPERCQKMPFNLDDPYPLLVVNIGSGVSILAVHSKDNYKRVTGTSLGGGTFLGLCSLLTGCESFEEALEMASKGDSTQADKLVRDIYGGDYERFGLPGWAVASSFGNMIYKEKRESVSKEDLARATLVTITNNIGSVARMCAVNEKINRVVFVGNFLRVNTLSMKLLAYALDYWSKGQLKALFLEHEGYFGAVGALLGLPNFS.

The Proton acceptor role is filled by glutamate 138. Residues serine 192, serine 195, and arginine 207 each coordinate acetyl-CoA.

Belongs to the type II pantothenate kinase family. Homodimer. In terms of tissue distribution, highly expressed in the liver.

Its subcellular location is the cytoplasm. The enzyme catalyses (R)-pantothenate + ATP = (R)-4'-phosphopantothenate + ADP + H(+). It participates in cofactor biosynthesis; coenzyme A biosynthesis; CoA from (R)-pantothenate: step 1/5. Its activity is regulated as follows. Subject to allosteric regulation, exists in two distinct conformational states, a catalytically incompetent (or open) conformation stabilized by the binding of acetyl(acyl)-CoA, and a catalytically competent (or closed) conformation stabilized by ATP-binding. Inhibited by acetyl-CoA and its thioesters which act as allosteric inhibitors and compete with the ATP-binding site. Inhibited by sulfonylureas and thiazolidinediones. Activated by oleoylethanolamide, palmitoyl-carnitine and oleoyl-carnitine. In terms of biological role, catalyzes the phosphorylation of pantothenate to generate 4'-phosphopantothenate in the first and rate-determining step of coenzyme A (CoA) synthesis. The polypeptide is Pantothenate kinase 3 (PANK3) (Homo sapiens (Human)).